The sequence spans 225 residues: 2-C-methyl-D-erythritol 4-phosphate cytidylyltransferase (225 aa).

This sequence belongs to the IspD/TarI cytidylyltransferase family. IspD subfamily.

It catalyses the reaction 2-C-methyl-D-erythritol 4-phosphate + CTP + H(+) = 4-CDP-2-C-methyl-D-erythritol + diphosphate. Its pathway is isoprenoid biosynthesis; isopentenyl diphosphate biosynthesis via DXP pathway; isopentenyl diphosphate from 1-deoxy-D-xylulose 5-phosphate: step 2/6. Its function is as follows. Catalyzes the formation of 4-diphosphocytidyl-2-C-methyl-D-erythritol from CTP and 2-C-methyl-D-erythritol 4-phosphate (MEP). The polypeptide is 2-C-methyl-D-erythritol 4-phosphate cytidylyltransferase (Haemophilus influenzae (strain PittEE)).